The primary structure comprises 440 residues: Thymidine phosphorylase (440 aa).

Belongs to the thymidine/pyrimidine-nucleoside phosphorylase family. In terms of assembly, homodimer.

It carries out the reaction thymidine + phosphate = 2-deoxy-alpha-D-ribose 1-phosphate + thymine. It participates in pyrimidine metabolism; dTMP biosynthesis via salvage pathway; dTMP from thymine: step 1/2. The enzymes which catalyze the reversible phosphorolysis of pyrimidine nucleosides are involved in the degradation of these compounds and in their utilization as carbon and energy sources, or in the rescue of pyrimidine bases for nucleotide synthesis. This chain is Thymidine phosphorylase, found in Salmonella paratyphi A (strain ATCC 9150 / SARB42).